The sequence spans 445 residues: Phosphoglucosamine mutase (445 aa).

The active-site Phosphoserine intermediate is the serine 102. Residues serine 102, aspartate 241, aspartate 243, and aspartate 245 each coordinate Mg(2+). The residue at position 102 (serine 102) is a Phosphoserine.

This sequence belongs to the phosphohexose mutase family. Mg(2+) is required as a cofactor. Activated by phosphorylation.

The enzyme catalyses alpha-D-glucosamine 1-phosphate = D-glucosamine 6-phosphate. Functionally, catalyzes the conversion of glucosamine-6-phosphate to glucosamine-1-phosphate. The protein is Phosphoglucosamine mutase of Salmonella paratyphi A (strain ATCC 9150 / SARB42).